The sequence spans 44 residues: Cuticle protein CP463 (44 aa).

Tandem repeats lie at residues 3 to 20 and 27 to 44.

In terms of tissue distribution, calcified shell.

The chain is Cuticle protein CP463 from Cancer pagurus (Rock crab).